The following is a 560-amino-acid chain: DNA ligase B (560 aa).

Catalysis depends on Lys-124, which acts as the N6-AMP-lysine intermediate.

The protein belongs to the NAD-dependent DNA ligase family. LigB subfamily.

The enzyme catalyses NAD(+) + (deoxyribonucleotide)n-3'-hydroxyl + 5'-phospho-(deoxyribonucleotide)m = (deoxyribonucleotide)n+m + AMP + beta-nicotinamide D-nucleotide.. Functionally, catalyzes the formation of phosphodiester linkages between 5'-phosphoryl and 3'-hydroxyl groups in double-stranded DNA using NAD as a coenzyme and as the energy source for the reaction. In Escherichia coli O139:H28 (strain E24377A / ETEC), this protein is DNA ligase B.